The following is a 343-amino-acid chain: Ornithine carbamoyltransferase, catabolic (343 aa).

62-65 (STRT) is a carbamoyl phosphate binding site. His79 lines the Ni(2+) pocket. Residues Gln89, Arg113, and 140–143 (HPTQ) each bind carbamoyl phosphate. L-ornithine-binding positions include Asn172, Asp236, and 240–241 (SM). Carbamoyl phosphate is bound by residues 278-279 (CL) and Arg323.

This sequence belongs to the aspartate/ornithine carbamoyltransferase superfamily. OTCase family. In terms of assembly, homohexamer; dimer of trimers. It depends on Ni(2+) as a cofactor.

It localises to the cytoplasm. It catalyses the reaction carbamoyl phosphate + L-ornithine = L-citrulline + phosphate + H(+). It participates in amino-acid degradation; L-arginine degradation via ADI pathway; carbamoyl phosphate from L-arginine: step 2/2. Its function is as follows. Involved in the catabolism of arginine. Catalyzes the phosphorolysis of citrulline, the reverse reaction of the biosynthetic one, yielding ornithine and carbamoyl phosphate which serve to generate ATP from ADP. This is Ornithine carbamoyltransferase, catabolic from Lentilactobacillus hilgardii (Lactobacillus hilgardii).